Reading from the N-terminus, the 581-residue chain is Pyridine nucleotide-disulfide oxidoreductase domain-containing protein 2 (581 aa).

38 to 71 (VVIGAGHNGLVAAAYLQRLGVNTAVFERRHVIGG) contributes to the FAD binding site.

It belongs to the carotenoid/retinoid oxidoreductase family. Interacts with COX5B; this interaction may contribute to localize PYROXD2 to the inner face of the inner mitochondrial membrane.

Its subcellular location is the mitochondrion matrix. Probable oxidoreductase that may play a role as regulator of mitochondrial function. The protein is Pyridine nucleotide-disulfide oxidoreductase domain-containing protein 2 of Rattus norvegicus (Rat).